We begin with the raw amino-acid sequence, 157 residues long: Frd operon probable iron-sulfur subunit A (157 aa).

3 4Fe-4S ferredoxin-type domains span residues 24–55, 56–85, and 100–133; these read KGFSISTAVVCHQCEDAPCANVCPNGAIIHNK, DYYYVDQDKCIGCKTCVLACPYGTMEVVSR, and FKAEANKCDLCHHRAEGPACVEVCPTQALVCIDR. 12 residues coordinate [4Fe-4S] cluster: Cys-34, Cys-37, Cys-42, Cys-46, Cys-65, Cys-68, Cys-71, Cys-75, Cys-107, Cys-110, Cys-119, and Cys-123.

In Proteus vulgaris, this protein is Frd operon probable iron-sulfur subunit A.